The sequence spans 138 residues: MSTIRVDVVSAEQSIFSGEAKFVALPGESGELGILRGHTPLITRIRPGSVRIEKADGDEEFVFVAGGYLEVQPDRVTVLADTAIRGHDLDEAKAIEAKKRAEEAMQNRGTDFDMALAQSEFAMAAAQLAAIARFRRKK.

Belongs to the ATPase epsilon chain family. F-type ATPases have 2 components, CF(1) - the catalytic core - and CF(0) - the membrane proton channel. CF(1) has five subunits: alpha(3), beta(3), gamma(1), delta(1), epsilon(1). CF(0) has three main subunits: a, b and c.

It is found in the cell membrane. In terms of biological role, produces ATP from ADP in the presence of a proton gradient across the membrane. The chain is ATP synthase epsilon chain from Polynucleobacter asymbioticus (strain DSM 18221 / CIP 109841 / QLW-P1DMWA-1) (Polynucleobacter necessarius subsp. asymbioticus).